Here is a 186-residue protein sequence, read N- to C-terminus: MIALFNKLLDWFKALFWKEEMELTLVGLQYSGKTTFVNVIASGQFNEDMIPTVGFNMRKITKGNVTIKLWDIGGQPRFRSMWERYCRGVSAIVYMVDAADQEKIEASKNELHNLLDKPQLQGIPVLVLGNKRDLAGALDEKELIEKMNLSAIQDREICCYSISCKEKDNIDITLQWLIQHSKSRRS.

Residues 1–19 (MIALFNKLLDWFKALFWKE) constitute an intramembrane region (note=Mediates targeting to membranes). GTP contacts are provided by residues 29-35 (QYSGKTT), 71-75 (DIGGQ), and 130-133 (NKRD).

The protein belongs to the small GTPase superfamily. Arf family. Interacts with PLEKHM1. When GTP-bound, interacts with RUFY3 and RUFY4, but not with RUFY1, nor RUFY2.

It localises to the late endosome membrane. It is found in the lysosome membrane. The protein resides in the cytoplasm. The protein localises to the cytoskeleton. Its subcellular location is the spindle. It localises to the cell projection. It is found in the axon. The protein resides in the synapse. Its function is as follows. Plays a role in lysosomes motility. In neurons, mediates the anterograde axonal long-range transport of presynaptic lysosome-related vesicles required for presynaptic biogenesis and synaptic function. May play a role in chromosome segregation. The protein is ADP-ribosylation factor-like protein 8A (Arl8a) of Mus musculus (Mouse).